The chain runs to 99 residues: Large ribosomal subunit protein bL21 (99 aa).

This sequence belongs to the bacterial ribosomal protein bL21 family. As to quaternary structure, part of the 50S ribosomal subunit. Contacts protein L20.

Functionally, this protein binds to 23S rRNA in the presence of protein L20. The polypeptide is Large ribosomal subunit protein bL21 (Mesoplasma florum (strain ATCC 33453 / NBRC 100688 / NCTC 11704 / L1) (Acholeplasma florum)).